We begin with the raw amino-acid sequence, 372 residues long: Alanine dehydrogenase 1 (372 aa).

His94 is an active-site residue. NAD(+) is bound at residue 170–200; the sequence is TYVIFGGGVAATNAANVALGLNAKVIIIELN.

It belongs to the AlaDH/PNT family.

It carries out the reaction L-alanine + NAD(+) + H2O = pyruvate + NH4(+) + NADH + H(+). It participates in amino-acid degradation; L-alanine degradation via dehydrogenase pathway; NH(3) and pyruvate from L-alanine: step 1/1. Functionally, may play a role in cell wall synthesis as L-alanine is an important constituent of the peptidoglycan layer. The polypeptide is Alanine dehydrogenase 1 (ald1) (Staphylococcus aureus (strain NCTC 8325 / PS 47)).